The following is a 160-amino-acid chain: Ribosome maturation factor RimP (160 aa).

The protein belongs to the RimP family.

Its subcellular location is the cytoplasm. In terms of biological role, required for maturation of 30S ribosomal subunits. This chain is Ribosome maturation factor RimP, found in Cronobacter sakazakii (strain ATCC BAA-894) (Enterobacter sakazakii).